The chain runs to 374 residues: Pectinesterase (374 aa).

Residues 1–31 (MVKLLNSTRELSINALSMLNSFGDMVAQATG) form the signal peptide. Asparagine 58 and asparagine 124 each carry an N-linked (GlcNAc...) asparagine glycan. Threonine 133 and glutamine 163 together coordinate substrate. The active-site Proton donor is aspartate 186. Cysteine 200 and cysteine 220 form a disulfide bridge. Catalysis depends on aspartate 207, which acts as the Nucleophile. Asparagine 230 carries N-linked (GlcNAc...) asparagine glycosylation. 2 residues coordinate substrate: arginine 275 and tryptophan 277. A glycan (N-linked (GlcNAc...) asparagine) is linked at asparagine 303.

The protein belongs to the pectinesterase family. As to expression, pollen, and at much lower levels in pistils and petals.

The protein resides in the secreted. The protein localises to the cell wall. The catalysed reaction is [(1-&gt;4)-alpha-D-galacturonosyl methyl ester](n) + n H2O = [(1-&gt;4)-alpha-D-galacturonosyl](n) + n methanol + n H(+). The protein operates within glycan metabolism; pectin degradation; 2-dehydro-3-deoxy-D-gluconate from pectin: step 1/5. May play a role in pollen germination and/or tube growth. The protein is Pectinesterase (PPE1) of Petunia integrifolia (Violet-flowered petunia).